A 27-amino-acid polypeptide reads, in one-letter code: Phospholipase A2 2 (27 aa).

The interval 1–27 (FMKVIDPGTKWCGPGNKAADDTDNGKN) is disordered. Residues W11, G13, and G15 each coordinate Ca(2+). A compositionally biased stretch (basic and acidic residues) spans 18-27 (AADDTDNGKN).

This sequence belongs to the phospholipase A2 family. Requires Ca(2+) as cofactor. As to expression, expressed by the venom gland.

It localises to the secreted. The enzyme catalyses a 1,2-diacyl-sn-glycero-3-phosphocholine + H2O = a 1-acyl-sn-glycero-3-phosphocholine + a fatty acid + H(+). In terms of biological role, PLA2 catalyzes the calcium-dependent hydrolysis of the 2-acyl groups in 3-sn-phosphoglycerides. This chain is Phospholipase A2 2, found in Opisthacanthus cayaporum (South American scorpion).